A 244-amino-acid chain; its full sequence is Octanoyltransferase (244 aa).

The interval 1-21 is disordered; the sequence is MDKKLHSVSPESGPNSNLDLT. Residues 9-21 show a composition bias toward polar residues; the sequence is SPESGPNSNLDLT. The 186-residue stretch at 59 to 244 folds into the BPL/LPL catalytic domain; sequence PFSPQAVWLL…LNWEKINQSL (186 aa). Residues 101 to 108, 168 to 170, and 181 to 183 contribute to the substrate site; these read RGGEVTHH, SIG, and GFS. The active-site Acyl-thioester intermediate is the Cys-199.

Belongs to the LipB family.

Its subcellular location is the cytoplasm. It carries out the reaction octanoyl-[ACP] + L-lysyl-[protein] = N(6)-octanoyl-L-lysyl-[protein] + holo-[ACP] + H(+). Its pathway is protein modification; protein lipoylation via endogenous pathway; protein N(6)-(lipoyl)lysine from octanoyl-[acyl-carrier-protein]: step 1/2. Functionally, catalyzes the transfer of endogenously produced octanoic acid from octanoyl-acyl-carrier-protein onto the lipoyl domains of lipoate-dependent enzymes. Lipoyl-ACP can also act as a substrate although octanoyl-ACP is likely to be the physiological substrate. The protein is Octanoyltransferase of Prochlorococcus marinus (strain NATL1A).